We begin with the raw amino-acid sequence, 346 residues long: Biotin synthase (346 aa).

A Radical SAM core domain is found at 38–256; it reads RQVQVSTLLS…IAVARIMMPT (219 aa). [4Fe-4S] cluster contacts are provided by cysteine 53, cysteine 57, and cysteine 60. Cysteine 97, cysteine 128, cysteine 188, and arginine 260 together coordinate [2Fe-2S] cluster.

It belongs to the radical SAM superfamily. Biotin synthase family. In terms of assembly, homodimer. [4Fe-4S] cluster is required as a cofactor. It depends on [2Fe-2S] cluster as a cofactor.

It carries out the reaction (4R,5S)-dethiobiotin + (sulfur carrier)-SH + 2 reduced [2Fe-2S]-[ferredoxin] + 2 S-adenosyl-L-methionine = (sulfur carrier)-H + biotin + 2 5'-deoxyadenosine + 2 L-methionine + 2 oxidized [2Fe-2S]-[ferredoxin]. Its pathway is cofactor biosynthesis; biotin biosynthesis; biotin from 7,8-diaminononanoate: step 2/2. Functionally, catalyzes the conversion of dethiobiotin (DTB) to biotin by the insertion of a sulfur atom into dethiobiotin via a radical-based mechanism. The polypeptide is Biotin synthase (Cronobacter sakazakii (strain ATCC BAA-894) (Enterobacter sakazakii)).